Here is a 217-residue protein sequence, read N- to C-terminus: Membrane-spanning 4-domains subfamily A member 6C (217 aa).

Residues 1-20 (MIPQVVTNETITTISPNGIN) are compositionally biased toward polar residues. The interval 1-33 (MIPQVVTNETITTISPNGINFPQKDESQPTQQR) is disordered. Residues 1-46 (MIPQVVTNETITTISPNGINFPQKDESQPTQQRQDSLKKHLKAEIK) are Cytoplasmic-facing. The chain crosses the membrane as a helical span at residues 47-67 (VIVAIQIMCAVTVLALGIILA). Over 68 to 84 (SVPPVPYFNSVFSVLLK) the chain is Extracellular. A helical membrane pass occupies residues 85–105 (SGYPFIGALFFIASGILSIIT). The Cytoplasmic segment spans residues 106 to 121 (ERKSTKPLVDASLTLN). A helical transmembrane segment spans residues 122–142 (ILSVSFAFVGIIIISVSLAGL). The Extracellular segment spans residues 143–186 (HPASEQCKQSKELSLIEHDYYQPFYNSDRSECAVTKSILTGALS). The chain crosses the membrane as a helical span at residues 187-207 (VMLIISVLELGLALLSAMLWL). At 208-217 (REGVLTSLRM) the chain is on the cytoplasmic side.

This sequence belongs to the MS4A family. Expressed only by thymus, spleen, peripheral lymph node and bone marrow.

It localises to the membrane. In terms of biological role, may be involved in signal transduction as a component of a multimeric receptor complex. The polypeptide is Membrane-spanning 4-domains subfamily A member 6C (Ms4a6c) (Mus musculus (Mouse)).